The chain runs to 248 residues: 2,3-bisphosphoglycerate-dependent phosphoglycerate mutase (248 aa).

Substrate contacts are provided by residues 8–15 (RHGESGWN) and Arg-58. The Tele-phosphohistidine intermediate role is filled by His-9. The disordered stretch occupies residues 82–101 (GTGEDRTEREDGSRKDRKEK). Glu-124 functions as the Proton donor/acceptor in the catalytic mechanism. Substrate contacts are provided by residues 124–127 (ERYY) and Lys-135.

It belongs to the phosphoglycerate mutase family. BPG-dependent PGAM subfamily.

The catalysed reaction is (2R)-2-phosphoglycerate = (2R)-3-phosphoglycerate. It participates in carbohydrate degradation; glycolysis; pyruvate from D-glyceraldehyde 3-phosphate: step 3/5. Catalyzes the interconversion of 2-phosphoglycerate and 3-phosphoglycerate. The sequence is that of 2,3-bisphosphoglycerate-dependent phosphoglycerate mutase from Methanosarcina acetivorans (strain ATCC 35395 / DSM 2834 / JCM 12185 / C2A).